Consider the following 106-residue polypeptide: Pyrimidine/purine nucleoside phosphorylase (106 aa).

It belongs to the nucleoside phosphorylase PpnP family.

The catalysed reaction is a purine D-ribonucleoside + phosphate = a purine nucleobase + alpha-D-ribose 1-phosphate. It carries out the reaction adenosine + phosphate = alpha-D-ribose 1-phosphate + adenine. It catalyses the reaction cytidine + phosphate = cytosine + alpha-D-ribose 1-phosphate. The enzyme catalyses guanosine + phosphate = alpha-D-ribose 1-phosphate + guanine. The catalysed reaction is inosine + phosphate = alpha-D-ribose 1-phosphate + hypoxanthine. It carries out the reaction thymidine + phosphate = 2-deoxy-alpha-D-ribose 1-phosphate + thymine. It catalyses the reaction uridine + phosphate = alpha-D-ribose 1-phosphate + uracil. The enzyme catalyses xanthosine + phosphate = alpha-D-ribose 1-phosphate + xanthine. Functionally, catalyzes the phosphorolysis of diverse nucleosides, yielding D-ribose 1-phosphate and the respective free bases. Can use uridine, adenosine, guanosine, cytidine, thymidine, inosine and xanthosine as substrates. Also catalyzes the reverse reactions. The protein is Pyrimidine/purine nucleoside phosphorylase of Leptospira interrogans serogroup Icterohaemorrhagiae serovar copenhageni (strain Fiocruz L1-130).